The chain runs to 476 residues: UDP-N-acetylmuramate--L-alanine ligase (476 aa).

112–118 lines the ATP pocket; sequence GTHGKTT.

The protein belongs to the MurCDEF family.

It is found in the cytoplasm. The catalysed reaction is UDP-N-acetyl-alpha-D-muramate + L-alanine + ATP = UDP-N-acetyl-alpha-D-muramoyl-L-alanine + ADP + phosphate + H(+). It functions in the pathway cell wall biogenesis; peptidoglycan biosynthesis. Its function is as follows. Cell wall formation. The chain is UDP-N-acetylmuramate--L-alanine ligase from Magnetococcus marinus (strain ATCC BAA-1437 / JCM 17883 / MC-1).